A 975-amino-acid chain; its full sequence is 5'-3' exoribonuclease 2 homolog (975 aa).

Residues 262–279 form a CCHC-type zinc finger; sequence RACDLCGQYGHELKECRG. Disordered regions lie at residues 424-443 and 505-532; these read MQMYGGGGRGGRGRGRGRGQ and SPADIASRKRKAEQPLIKPEEEEDEGPK. The interaction with paxt-1 stretch occupies residues 534-787; sequence DIRLYESGWK…GICVLYEDPE (254 aa). Residues 804-821 show a composition bias toward basic and acidic residues; the sequence is EPEKTLKPDDWNDRRDGR. The tract at residues 804 to 975 is disordered; that stretch reads EPEKTLKPDD…GGYHGNSSWR (172 aa). Composition is skewed to gly residues over residues 850–860, 886–895, and 908–932; these read RGGGGGGGGYR, NYGGRDGGGP, and GYQGGGYGGGYGGGGGGGGGGGGGS.

Belongs to the 5'-3' exonuclease family. XRN2/RAT1 subfamily. As to quaternary structure, interacts with paxt-1 (via N-terminus); the interaction is direct and results in stabilization of xrn-2 in the complex. In terms of tissue distribution, expressed in the pharyngeal myoepithelium and intestine. Also expressed in several anterior neurons including the sensory neurons, as well as the interneuron PVT and the pharyngeal motorneuron M5.

Its subcellular location is the nucleus. Its function is as follows. Possesses 5'-&gt;3' exoribonuclease activity. Plays a role in maintenance of steady-state concentration and turnover of microRNAs (miRNA) by degradation of mature miRNA. Degradation role is enhanced when in complex with paxt-1. Partially redundant to xrn-1 in miRNA guide strand degradation. Implicated in differential regulation of mRNAs such as let-7 by controlling the accumulation of mature miRNA. Positively regulates molting of the pharyngeal cuticle. The chain is 5'-3' exoribonuclease 2 homolog from Caenorhabditis elegans.